The following is a 543-amino-acid chain: CTP synthase (543 aa).

The amidoligase domain stretch occupies residues 1–265; it reads MARYIFITGG…DDEVLAAFAI (265 aa). CTP is bound at residue Ser13. Ser13 contacts UTP. 14–19 is an ATP binding site; it reads SLGKGL. Residue Tyr54 participates in L-glutamine binding. ATP is bound at residue Asp71. Residues Asp71 and Glu139 each contribute to the Mg(2+) site. CTP is bound by residues 146-148, 186-191, and Lys222; these read DIE and KTKPTQ. Residues 186 to 191 and Lys222 contribute to the UTP site; that span reads KTKPTQ. 238-240 lines the ATP pocket; the sequence is RDA. A Glutamine amidotransferase type-1 domain is found at 291-542; sequence TIAIVGKYTG…IEAALVRSRL (252 aa). Residue Gly353 coordinates L-glutamine. The Nucleophile; for glutamine hydrolysis role is filled by Cys380. L-glutamine contacts are provided by residues 381–384, Glu404, and Arg470; that span reads FGMQ. Catalysis depends on residues His515 and Glu517.

This sequence belongs to the CTP synthase family. In terms of assembly, homotetramer.

The catalysed reaction is UTP + L-glutamine + ATP + H2O = CTP + L-glutamate + ADP + phosphate + 2 H(+). It carries out the reaction L-glutamine + H2O = L-glutamate + NH4(+). The enzyme catalyses UTP + NH4(+) + ATP = CTP + ADP + phosphate + 2 H(+). It participates in pyrimidine metabolism; CTP biosynthesis via de novo pathway; CTP from UDP: step 2/2. With respect to regulation, allosterically activated by GTP, when glutamine is the substrate; GTP has no effect on the reaction when ammonia is the substrate. The allosteric effector GTP functions by stabilizing the protein conformation that binds the tetrahedral intermediate(s) formed during glutamine hydrolysis. Inhibited by the product CTP, via allosteric rather than competitive inhibition. In terms of biological role, catalyzes the ATP-dependent amination of UTP to CTP with either L-glutamine or ammonia as the source of nitrogen. Regulates intracellular CTP levels through interactions with the four ribonucleotide triphosphates. This Rhodopseudomonas palustris (strain BisB5) protein is CTP synthase.